The primary structure comprises 476 residues: 3-isopropylmalate dehydratase large subunit (476 aa).

Residues cysteine 347, cysteine 407, and cysteine 410 each contribute to the [4Fe-4S] cluster site. Positions 418–442 (LAPGERSASTSNRNFEGRQGKGGRT) are disordered.

Belongs to the aconitase/IPM isomerase family. LeuC type 1 subfamily. In terms of assembly, heterodimer of LeuC and LeuD. [4Fe-4S] cluster serves as cofactor.

It carries out the reaction (2R,3S)-3-isopropylmalate = (2S)-2-isopropylmalate. The protein operates within amino-acid biosynthesis; L-leucine biosynthesis; L-leucine from 3-methyl-2-oxobutanoate: step 2/4. In terms of biological role, catalyzes the isomerization between 2-isopropylmalate and 3-isopropylmalate, via the formation of 2-isopropylmaleate. This chain is 3-isopropylmalate dehydratase large subunit, found in Streptomyces coelicolor (strain ATCC BAA-471 / A3(2) / M145).